A 535-amino-acid chain; its full sequence is Alpha-1,3-mannosyl-glycoprotein 4-beta-N-acetylglucosaminyltransferase A (535 aa).

Residues 1–4 (MRLR) are Cytoplasmic-facing. Residues 5–27 (NGTVATALAFITSFLTLSWYTTW) traverse the membrane as a helical; Signal-anchor for type II membrane protein segment. A coiled-coil region spans residues 28–63 (QNGKEKLIAYQREFLALKERLRIAEHRISQRSSELN). At 28 to 535 (QNGKEKLIAY…NEIHIKKATK (508 aa)) the chain is on the lumenal side. 2 N-linked (GlcNAc...) asparagine glycosylation sites follow: N77 and N458. The residue at position 474 (S474) is a Phosphoserine.

The protein belongs to the glycosyltransferase 54 family. It depends on a divalent metal cation as a cofactor. In terms of processing, N-glycosylated.

It localises to the golgi apparatus membrane. It is found in the secreted. The enzyme catalyses N(4)-{beta-D-GlcNAc-(1-&gt;2)-alpha-D-Man-(1-&gt;3)-[beta-D-GlcNAc-(1-&gt;2)-alpha-D-Man-(1-&gt;6)]-beta-D-Man-(1-&gt;4)-beta-D-GlcNAc-(1-&gt;4)-beta-D-GlcNAc}-L-asparaginyl-[protein] + UDP-N-acetyl-alpha-D-glucosamine = N(4)-{beta-D-GlcNAc-(1-&gt;2)-[beta-D-GlcNAc-(1-&gt;4)]-alpha-D-Man-(1-&gt;3)-[beta-D-GlcNAc-(1-&gt;2)-alpha-D-Man-(1-&gt;6)]-beta-D-Man-(1-&gt;4)-beta-D-GlcNAc-(1-&gt;4)-beta-D-GlcNAc}-L-asparaginyl-[protein] + UDP + H(+). The catalysed reaction is an N(4)-{beta-D-GlcNAc-(1-&gt;2)-alpha-D-Man-(1-&gt;3)-[alpha-D-Man-(1-&gt;6)]-beta-D-Man-(1-&gt;4)-beta-D-GlcNAc-(1-&gt;4)-beta-D-GlcNAc}-L-asparaginyl-[protein] + UDP-N-acetyl-alpha-D-glucosamine = an N(4)-{beta-D-GlcNAc-(1-&gt;2)-[beta-D-GlcNAc-(1-&gt;4)]-alpha-D-Man-(1-&gt;3)-[alpha-D-Man-(1-&gt;6)]-beta-D-Man-(1-&gt;4)-beta-D-GlcNAc-(1-&gt;4)-beta-D-GlcNAc}-L-asparaginyl-[protein] + UDP + H(+). It carries out the reaction an N(4)-{beta-D-GlcNAc-(1-&gt;2)-alpha-D-Man-(1-&gt;3)-[beta-D-GlcNAc-(1-&gt;2)-[beta-D-GlcNAc-(1-&gt;6)]-alpha-D-Man-(1-&gt;6)]-beta-D-Man-(1-&gt;4)-beta-D-GlcNAc-(1-&gt;4)-beta-D-GlcNAc}-L-asparaginyl-[protein] + UDP-N-acetyl-alpha-D-glucosamine = an N(4)-{beta-D-GlcNAc-(1-&gt;2)-[beta-D-GlcNAc-(1-&gt;4)]-alpha-D-Man-(1-&gt;3)-[beta-D-GlcNAc-(1-&gt;2)-[beta-D-GlcNAc-(1-&gt;6)]-alpha-D-Man-(1-&gt;6)]-beta-D-Man-(1-&gt;4)-beta-D-GlcNAc-(1-&gt;4)-beta-D-GlcNAc}-L-asparaginyl-[protein] + UDP + H(+). It catalyses the reaction an N(4)-{beta-D-GlcNAc-(1-&gt;2)-alpha-D-Man-(1-&gt;3)-[beta-D-GlcNAc-(1-&gt;2)-alpha-D-Man-(1-&gt;6)]-beta-D-Man-(1-&gt;4)-beta-D-GlcNAc-(1-&gt;4)-[alpha-L-Fuc-(1-&gt;6)]-beta-D-GlcNAc}-L-asparaginyl-[protein] + UDP-N-acetyl-alpha-D-glucosamine = N(4)-{beta-D-GlcNAc-(1-&gt;2)-[beta-D-GlcNAc-(1-&gt;4)]-alpha-D-Man-(1-&gt;3)-[beta-D-GlcNAc-(1-&gt;2)-alpha-D-Man-(1-&gt;6)]-beta-D-Man-(1-&gt;4)-beta-D-GlcNAc-(1-&gt;4)-[alpha-L-Fuc-(1-&gt;6)]-beta-D-GlcNAc}-asparaginyl-[protein] + UDP + H(+). The enzyme catalyses an N(4)-{beta-D-GlcNAc-(1-&gt;2)-alpha-D-Man-(1-&gt;3)-[beta-D-Gal-(1-&gt;4)-beta-D-GlcNAc-(1-&gt;2)-alpha-D-Man-(1-&gt;6)]-beta-D-Man-(1-&gt;4)-beta-D-GlcNAc-(1-&gt;4)-beta-D-GlcNAc}-L-asparaginyl-[protein] + UDP-N-acetyl-alpha-D-glucosamine = an N(4)-{beta-D-GlcNAc-(1-&gt;2)-[beta-D-GlcNAc-(1-&gt;4)]-alpha-D-Man-(1-&gt;3)-[beta-D-Gal-(1-&gt;4)-beta-D-GlcNAc-(1-&gt;2)-alpha-D-Man-(1-&gt;6)]-beta-D-Man-(1-&gt;4)-beta-D-GlcNAc-(1-&gt;4)-beta-D-GlcNAc}-L-asparaginyl-[protein] + UDP + H(+). The catalysed reaction is N(4)-{beta-D-GlcNAc-(1-&gt;2)-alpha-D-Man-(1-&gt;3)-[alpha-D-Man-(1-&gt;3)-{alpha-D-Man-(1-&gt;6)}-alpha-D-Man-(1-&gt;6)]-beta-D-Man-(1-&gt;4)-beta-D-GlcNAc-(1-&gt;4)-beta-D-GlcNAc}-asparaginyl-[protein] + UDP-N-acetyl-alpha-D-glucosamine = N(4)-{beta-D-GlcNAc-(1-&gt;2)-[beta-D-GlcNAc-(1-&gt;4)]-alpha-D-Man-(1-&gt;3)-[alpha-D-Man-(1-&gt;3)-{alpha-D-Man-(1-&gt;6)}-alpha-D-Man-(1-&gt;6)]-beta-D-Man-(1-&gt;4)-beta-D-GlcNAc-(1-&gt;4)-beta-D-GlcNAc}-asparaginyl-[protein] + UDP + H(+). It carries out the reaction N(4)-{beta-D-GlcNAc-(1-&gt;2)-alpha-D-Man-(1-&gt;3)-beta-D-Man-(1-&gt;4)-beta-D-GlcNAc-(1-&gt;4)-beta-D-GlcNAc}-asparaginyl-[protein] + UDP-N-acetyl-alpha-D-glucosamine = N(4)-{beta-D-GlcNAc-(1-&gt;2)-[beta-D-GlcNAc-(1-&gt;4)]-alpha-D-Man-(1-&gt;3)-beta-D-Man-(1-&gt;4)-beta-D-GlcNAc-(1-&gt;4)-beta-D-GlcNAc}-asparaginyl-[protein] + UDP + H(+). It participates in protein modification; protein glycosylation. Inhibited by UDP. Functionally, glycosyltransferase that catalyze the transfer of GlcNAc from UDP-GlcNAc to the GlcNAcbeta1-2Manalpha1-3 arm of the core structure of N-linked glycans through a beta1-4 linkage and participates in the production of tri- and tetra-antennary N-linked sugar chains. Involved in glucose transport by mediating SLC2A2/GLUT2 glycosylation, thereby controlling cell-surface expression of SLC2A2 in pancreatic beta cells. In Macaca fascicularis (Crab-eating macaque), this protein is Alpha-1,3-mannosyl-glycoprotein 4-beta-N-acetylglucosaminyltransferase A.